A 382-amino-acid polypeptide reads, in one-letter code: Mannitol-1-phosphate 5-dehydrogenase (382 aa).

NAD(+) is bound at residue 3 to 14 (ALHFGAGNIGRG).

This sequence belongs to the mannitol dehydrogenase family.

The catalysed reaction is D-mannitol 1-phosphate + NAD(+) = beta-D-fructose 6-phosphate + NADH + H(+). This chain is Mannitol-1-phosphate 5-dehydrogenase, found in Salmonella dublin (strain CT_02021853).